Reading from the N-terminus, the 133-residue chain is ATP synthase epsilon chain, chloroplastic (133 aa).

Belongs to the ATPase epsilon chain family. As to quaternary structure, F-type ATPases have 2 components, CF(1) - the catalytic core - and CF(0) - the membrane proton channel. CF(1) has five subunits: alpha(3), beta(3), gamma(1), delta(1), epsilon(1). CF(0) has three main subunits: a, b and c.

The protein resides in the plastid. It is found in the chloroplast thylakoid membrane. In terms of biological role, produces ATP from ADP in the presence of a proton gradient across the membrane. This chain is ATP synthase epsilon chain, chloroplastic, found in Piper cenocladum (Ant piper).